The primary structure comprises 152 residues: MAGLPRRIIKETQRLLAEPVPGIKAEPDESNARYFHVVIAGPQDSPFEGGTFKLELFLPEEYPMAAPKVRFMTKIYHPNVDKSGRICLDILKDKWSPALQIRTVLLSIQALLSAPNPDDPLANDVAEQWKTNEAQAIETARAWTRLYAMNNI.

The UBC core domain occupies 3 to 149 (GLPRRIIKET…ARAWTRLYAM (147 aa)). N6-acetyllysine is present on Lys-82. Residue Cys-87 is the Glycyl thioester intermediate of the active site. A Glycyl lysine isopeptide (Lys-Gly) (interchain with G-Cter in ISG15) cross-link involves residue Lys-92.

This sequence belongs to the ubiquitin-conjugating enzyme family. In terms of assembly, heterodimer with UBE2V2. Interacts (UBE2V2-UBE2N heterodimer) with the E3 ligase STUB1 (via the U-box domain); the complex has a specific 'Lys-63'-linked polyubiquitination activity. Interacts with RNF8 and RNF168. Interacts with RNF11. Interacts with the E3 ligases, HLTF and SHPRH; the interactions promote the 'Lys-63'-linked polyubiquitination of PCNA upon genotoxic stress and lead to DNA repair. Interacts with ARIH2 (via RING-type 2). Interacts with OTUB1; leading to inhibit E2-conjugating activity. Interacts with RIGI and RNF135; involved in RIGI ubiquitination and activation. In terms of processing, conjugation to ISG15 impairs formation of the thioester bond with ubiquitin but not interaction with UBE2V2.

It carries out the reaction S-ubiquitinyl-[E1 ubiquitin-activating enzyme]-L-cysteine + [E2 ubiquitin-conjugating enzyme]-L-cysteine = [E1 ubiquitin-activating enzyme]-L-cysteine + S-ubiquitinyl-[E2 ubiquitin-conjugating enzyme]-L-cysteine.. Its pathway is protein modification; protein ubiquitination. Activity is inhibited by binding to OTUB1, which prevents 'Lys-63'-linked polyubiquitination. Functionally, the UBE2V1-UBE2N and UBE2V2-UBE2N heterodimers catalyze the synthesis of non-canonical 'Lys-63'-linked polyubiquitin chains. This type of polyubiquitination does not lead to protein degradation by the proteasome. Mediates transcriptional activation of target genes. Plays a role in the control of progress through the cell cycle and differentiation. Plays a role in the error-free DNA repair pathway and contributes to the survival of cells after DNA damage. Acts together with the E3 ligases, HLTF and SHPRH, in the 'Lys-63'-linked poly-ubiquitination of PCNA upon genotoxic stress, which is required for DNA repair. Appears to act together with E3 ligase RNF5 in the 'Lys-63'-linked polyubiquitination of JKAMP thereby regulating JKAMP function by decreasing its association with components of the proteasome and ERAD. Promotes TRIM5 capsid-specific restriction activity and the UBE2V1-UBE2N heterodimer acts in concert with TRIM5 to generate 'Lys-63'-linked polyubiquitin chains which activate the MAP3K7/TAK1 complex which in turn results in the induction and expression of NF-kappa-B and MAPK-responsive inflammatory genes. Together with RNF135 and UB2V1, catalyzes the viral RNA-dependent 'Lys-63'-linked polyubiquitination of RIGI to activate the downstream signaling pathway that leads to interferon beta production. UBE2V1-UBE2N together with TRAF3IP2 E3 ubiquitin ligase mediate 'Lys-63'-linked polyubiquitination of TRAF6, a component of IL17A-mediated signaling pathway. The chain is Ubiquitin-conjugating enzyme E2 N (UBE2N) from Macaca fascicularis (Crab-eating macaque).